Here is a 180-residue protein sequence, read N- to C-terminus: UPF0149 protein XCV3523 (180 aa).

The protein belongs to the UPF0149 family.

This chain is UPF0149 protein XCV3523, found in Xanthomonas euvesicatoria pv. vesicatoria (strain 85-10) (Xanthomonas campestris pv. vesicatoria).